The sequence spans 224 residues: UPF0758 protein XF_0148 (224 aa).

Positions 102 to 224 constitute an MPN domain; it reads SIHDPISAGR…PVSFAEHGWL (123 aa). 3 residues coordinate Zn(2+): His173, His175, and Asp186. The short motif at 173–186 is the JAMM motif element; that stretch reads HNHPSGNREPSPAD.

Belongs to the UPF0758 family.

The protein is UPF0758 protein XF_0148 of Xylella fastidiosa (strain 9a5c).